We begin with the raw amino-acid sequence, 187 residues long: Calmodulin-like protein 1 (187 aa).

An N-acetylalanine modification is found at alanine 2. EF-hand domains are found at residues 8–43, 44–79, 81–116, and 117–152; these read EQIV…LGQN, PTEA…KLRD, DSEE…IGER, and LTDE…KKRR. Positions 21, 23, 25, 27, 32, 57, 59, 61, 63, 68, 94, 96, 98, 105, 130, 132, 134, 136, and 141 each coordinate Ca(2+). The disordered stretch occupies residues 153-187; the sequence is KRIEEKREHDGGSRTKSAGPSAAPASKRGQKCVIL. Residues 154–165 are compositionally biased toward basic and acidic residues; it reads RIEEKREHDGGS. Positions 169–178 are enriched in low complexity; it reads SAGPSAAPAS. Cysteine 184 bears the Cysteine methyl ester mark. The S-farnesyl cysteine moiety is linked to residue cysteine 184. The propeptide at 185–187 is removed in mature form; the sequence is VIL.

The protein belongs to the calmodulin family. In terms of tissue distribution, expressed in roots, etiolated shoots and flowers.

The protein resides in the membrane. Functionally, calcium-binding protein that binds and activates CAMK1, a calcium/calmodulin-dependent kinase. This is Calmodulin-like protein 1 (CML1) from Oryza sativa subsp. indica (Rice).